The chain runs to 261 residues: Cytochrome c oxidase subunit 3 (261 aa).

Residues 1–15 lie on the Mitochondrial matrix side of the membrane; that stretch reads MAHQAHAYHMVDPSP. A helical membrane pass occupies residues 16–34; it reads WPLTGAVAALLLTSGLAIW. Residues 35–40 lie on the Mitochondrial intermembrane side of the membrane; the sequence is FPFNSL. Residues 41-66 traverse the membrane as a helical segment; it reads ILLTLGLVLLLLTMYQWWRDIVREGT. Residues 67–72 lie on the Mitochondrial matrix side of the membrane; the sequence is FQGHHT. A helical membrane pass occupies residues 73-105; the sequence is PPVQKGLRYGMILFITSEVFFFLGFFWAFYHSS. Residues 106 to 128 are Mitochondrial intermembrane-facing; that stretch reads LAPTPELGGCWPPTGIVPLNPFE. A helical membrane pass occupies residues 129 to 152; that stretch reads VPLLNTAVLLASGVTVTWAHHSIM. Over 153–155 the chain is Mitochondrial matrix; the sequence is EGE. The chain crosses the membrane as a helical span at residues 156-183; that stretch reads RKQAIHSLTLTILLGFYFTFLQAMEYYE. Topologically, residues 184–190 are mitochondrial intermembrane; it reads APFTIAD. Residues 191-223 traverse the membrane as a helical segment; that stretch reads GVYGSTFFVATGFHGLHVIIGSTFLAICLLRQI. Over 224–232 the chain is Mitochondrial matrix; that stretch reads RYHFTSEHH. A helical membrane pass occupies residues 233–256; sequence FGFEAAAWYWHFVDVVWLFLYISI. Residues 257–261 lie on the Mitochondrial intermembrane side of the membrane; it reads YWWGS.

The protein belongs to the cytochrome c oxidase subunit 3 family. In terms of assembly, component of the cytochrome c oxidase (complex IV, CIV), a multisubunit enzyme composed of 14 subunits. The complex is composed of a catalytic core of 3 subunits MT-CO1, MT-CO2 and MT-CO3, encoded in the mitochondrial DNA, and 11 supernumerary subunits COX4I, COX5A, COX5B, COX6A, COX6B, COX6C, COX7A, COX7B, COX7C, COX8 and NDUFA4, which are encoded in the nuclear genome. The complex exists as a monomer or a dimer and forms supercomplexes (SCs) in the inner mitochondrial membrane with NADH-ubiquinone oxidoreductase (complex I, CI) and ubiquinol-cytochrome c oxidoreductase (cytochrome b-c1 complex, complex III, CIII), resulting in different assemblies (supercomplex SCI(1)III(2)IV(1) and megacomplex MCI(2)III(2)IV(2)).

Its subcellular location is the mitochondrion inner membrane. The catalysed reaction is 4 Fe(II)-[cytochrome c] + O2 + 8 H(+)(in) = 4 Fe(III)-[cytochrome c] + 2 H2O + 4 H(+)(out). Its function is as follows. Component of the cytochrome c oxidase, the last enzyme in the mitochondrial electron transport chain which drives oxidative phosphorylation. The respiratory chain contains 3 multisubunit complexes succinate dehydrogenase (complex II, CII), ubiquinol-cytochrome c oxidoreductase (cytochrome b-c1 complex, complex III, CIII) and cytochrome c oxidase (complex IV, CIV), that cooperate to transfer electrons derived from NADH and succinate to molecular oxygen, creating an electrochemical gradient over the inner membrane that drives transmembrane transport and the ATP synthase. Cytochrome c oxidase is the component of the respiratory chain that catalyzes the reduction of oxygen to water. Electrons originating from reduced cytochrome c in the intermembrane space (IMS) are transferred via the dinuclear copper A center (CU(A)) of subunit 2 and heme A of subunit 1 to the active site in subunit 1, a binuclear center (BNC) formed by heme A3 and copper B (CU(B)). The BNC reduces molecular oxygen to 2 water molecules using 4 electrons from cytochrome c in the IMS and 4 protons from the mitochondrial matrix. The chain is Cytochrome c oxidase subunit 3 (mt-co3) from Tetraodon nigroviridis (Spotted green pufferfish).